A 108-amino-acid polypeptide reads, in one-letter code: Small ribosomal subunit protein eS25B (108 aa).

Residues Met1–Gly20 are compositionally biased toward low complexity. A disordered region spans residues Met1 to Lys30. Pro2 is subject to N,N-dimethylproline; by NTM1. The span at Lys21–Lys30 shows a compositional bias: basic residues.

It belongs to the eukaryotic ribosomal protein eS25 family. In terms of assembly, component of the small ribosomal subunit (SSU). Mature yeast ribosomes consist of a small (40S) and a large (60S) subunit. The 40S small subunit contains 1 molecule of ribosomal RNA (18S rRNA) and 33 different proteins (encoded by 57 genes). The large 60S subunit contains 3 rRNA molecules (25S, 5.8S and 5S rRNA) and 46 different proteins (encoded by 81 genes).

The protein localises to the cytoplasm. Component of the ribosome, a large ribonucleoprotein complex responsible for the synthesis of proteins in the cell. The small ribosomal subunit (SSU) binds messenger RNAs (mRNAs) and translates the encoded message by selecting cognate aminoacyl-transfer RNA (tRNA) molecules. The large subunit (LSU) contains the ribosomal catalytic site termed the peptidyl transferase center (PTC), which catalyzes the formation of peptide bonds, thereby polymerizing the amino acids delivered by tRNAs into a polypeptide chain. The nascent polypeptides leave the ribosome through a tunnel in the LSU and interact with protein factors that function in enzymatic processing, targeting, and the membrane insertion of nascent chains at the exit of the ribosomal tunnel. In Saccharomyces cerevisiae (strain ATCC 204508 / S288c) (Baker's yeast), this protein is Small ribosomal subunit protein eS25B.